The following is a 90-amino-acid chain: Small ribosomal subunit protein bS16 (90 aa).

It belongs to the bacterial ribosomal protein bS16 family.

The protein is Small ribosomal subunit protein bS16 of Bacillus licheniformis (strain ATCC 14580 / DSM 13 / JCM 2505 / CCUG 7422 / NBRC 12200 / NCIMB 9375 / NCTC 10341 / NRRL NRS-1264 / Gibson 46).